A 581-amino-acid chain; its full sequence is ATP-dependent lipid A-core flippase (581 aa).

The next 5 membrane-spanning stretches (helical) occupy residues 15 to 35 (LWPI…ALIL), 68 to 88 (LIVI…SYCI), 152 to 172 (IIGL…ILIV), 252 to 272 (PIIQ…ASFP), and 274 to 294 (IMET…IALM). The region spanning 27–309 (IVAAVALILN…LTNVNAQFQR (283 aa)) is the ABC transmembrane type-1 domain. Residues 341–577 (IEFRNVTFCY…NGVYSQLHRM (237 aa)) form the ABC transporter domain. 375 to 382 (GRSGSGKS) is an ATP binding site.

This sequence belongs to the ABC transporter superfamily. Lipid exporter (TC 3.A.1.106) family. Homodimer.

The protein localises to the cell inner membrane. It carries out the reaction ATP + H2O + lipid A-core oligosaccharideSide 1 = ADP + phosphate + lipid A-core oligosaccharideSide 2.. In terms of biological role, involved in lipopolysaccharide (LPS) biosynthesis. Translocates lipid A-core from the inner to the outer leaflet of the inner membrane. Transmembrane domains (TMD) form a pore in the inner membrane and the ATP-binding domain (NBD) is responsible for energy generation. In Photorhabdus laumondii subsp. laumondii (strain DSM 15139 / CIP 105565 / TT01) (Photorhabdus luminescens subsp. laumondii), this protein is ATP-dependent lipid A-core flippase.